An 816-amino-acid chain; its full sequence is Leucine--tRNA ligase (816 aa).

Positions 40–51 match the 'HIGH' region motif; it reads SYPSGSQLHAGH. A 'KMSKS' region motif is present at residues 576-580; that stretch reads KMSKS. Lysine 579 contributes to the ATP binding site.

This sequence belongs to the class-I aminoacyl-tRNA synthetase family.

It is found in the cytoplasm. The catalysed reaction is tRNA(Leu) + L-leucine + ATP = L-leucyl-tRNA(Leu) + AMP + diphosphate. In Clostridium perfringens (strain ATCC 13124 / DSM 756 / JCM 1290 / NCIMB 6125 / NCTC 8237 / Type A), this protein is Leucine--tRNA ligase.